We begin with the raw amino-acid sequence, 877 residues long: Alanine--tRNA ligase (877 aa).

4 residues coordinate Zn(2+): His565, His569, Cys667, and His671.

Belongs to the class-II aminoacyl-tRNA synthetase family. The cofactor is Zn(2+).

The protein resides in the cytoplasm. The enzyme catalyses tRNA(Ala) + L-alanine + ATP = L-alanyl-tRNA(Ala) + AMP + diphosphate. Catalyzes the attachment of alanine to tRNA(Ala) in a two-step reaction: alanine is first activated by ATP to form Ala-AMP and then transferred to the acceptor end of tRNA(Ala). Also edits incorrectly charged Ser-tRNA(Ala) and Gly-tRNA(Ala) via its editing domain. This chain is Alanine--tRNA ligase, found in Acidithiobacillus ferridurans.